The primary structure comprises 232 residues: Phosphatidylserine decarboxylase proenzyme (232 aa).

The Schiff-base intermediate with substrate; via pyruvic acid role is filled by serine 190. Pyruvic acid (Ser); by autocatalysis is present on serine 190.

This sequence belongs to the phosphatidylserine decarboxylase family. PSD-A subfamily. As to quaternary structure, heterodimer of a large membrane-associated beta subunit and a small pyruvoyl-containing alpha subunit. The cofactor is pyruvate. Is synthesized initially as an inactive proenzyme. Formation of the active enzyme involves a self-maturation process in which the active site pyruvoyl group is generated from an internal serine residue via an autocatalytic post-translational modification. Two non-identical subunits are generated from the proenzyme in this reaction, and the pyruvate is formed at the N-terminus of the alpha chain, which is derived from the carboxyl end of the proenzyme. The post-translation cleavage follows an unusual pathway, termed non-hydrolytic serinolysis, in which the side chain hydroxyl group of the serine supplies its oxygen atom to form the C-terminus of the beta chain, while the remainder of the serine residue undergoes an oxidative deamination to produce ammonia and the pyruvoyl prosthetic group on the alpha chain.

It is found in the cell membrane. The enzyme catalyses a 1,2-diacyl-sn-glycero-3-phospho-L-serine + H(+) = a 1,2-diacyl-sn-glycero-3-phosphoethanolamine + CO2. It functions in the pathway phospholipid metabolism; phosphatidylethanolamine biosynthesis; phosphatidylethanolamine from CDP-diacylglycerol: step 2/2. Its function is as follows. Catalyzes the formation of phosphatidylethanolamine (PtdEtn) from phosphatidylserine (PtdSer). The sequence is that of Phosphatidylserine decarboxylase proenzyme from Brucella canis (strain ATCC 23365 / NCTC 10854 / RM-666).